Here is a 369-residue protein sequence, read N- to C-terminus: MTATPVYFDISCNGKPKGRVVFKLYDDVVPKTAANFRSLCTGDKGISPKSGKPLSYKDSIFHRVIKDFMCQGGDFTAPSDHLGTGGESIYGEKFEDENFKLNHNKPFLLSMANSGPNTNGSQFFITTVPTPHLDGKHVVFGEVIEGKSIVRQLERSEKGANDRPVEDWKIADCGELPANYEPVASGADDGTGDTYEEILTDNDTIDINNPQSVFAAVSKIKDIGTKLLKEGKLEKSYEKYTKANSYLNDYFPEGLSPEDLSTLHGLKLSCYLNAALVALKLKHGKDAIAAANNALEVEQIDDKSKTKALYRKGMGYILVKDEEQAQKILEEALELEPNDAAIQKGLQEAKHNIKLRRDKQKKAMAKFFS.

Residues Y7–E175 form the PPIase cyclophilin-type domain. TPR repeat units follow at residues V217 to Y250, L268 to D301, and T306 to D339.

It belongs to the cyclophilin-type PPIase family. PPIase D subfamily.

Its subcellular location is the cytoplasm. It carries out the reaction [protein]-peptidylproline (omega=180) = [protein]-peptidylproline (omega=0). Its function is as follows. PPIases accelerate the folding of proteins. It catalyzes the cis-trans isomerization of proline imidic peptide bonds in oligopeptides. The chain is Peptidyl-prolyl cis-trans isomerase D (CPR6) from Candida albicans (strain SC5314 / ATCC MYA-2876) (Yeast).